Here is a 370-residue protein sequence, read N- to C-terminus: Serine/threonine-protein kinase RIM11/MSD1 (370 aa).

In terms of domain architecture, Protein kinase spans 39 to 322 (FPTTEVVGHG…ALQCLCSPYF (284 aa)). ATP-binding positions include 45-53 (VGHGSFGVV) and Lys68. The Proton acceptor role is filled by Asp164. Tyr199 carries the post-translational modification Phosphotyrosine.

It belongs to the protein kinase superfamily. CMGC Ser/Thr protein kinase family. GSK-3 subfamily. As to quaternary structure, interacts with TDA1.

The catalysed reaction is L-seryl-[protein] + ATP = O-phospho-L-seryl-[protein] + ADP + H(+). It catalyses the reaction L-threonyl-[protein] + ATP = O-phospho-L-threonyl-[protein] + ADP + H(+). In terms of biological role, serine/threonine protein kinase that is thought to function in regulating kinetochore activity and entry into meiosis. Could phosphorylate IME1. The chain is Serine/threonine-protein kinase RIM11/MSD1 (RIM11) from Saccharomyces cerevisiae (strain ATCC 204508 / S288c) (Baker's yeast).